Consider the following 423-residue polypeptide: Putative competence-damage inducible protein (423 aa).

The protein belongs to the CinA family.

The sequence is that of Putative competence-damage inducible protein from Streptococcus pyogenes serotype M18 (strain MGAS8232).